A 328-amino-acid polypeptide reads, in one-letter code: PLASTID TRANSCRIPTIONALLY ACTIVE protein 6, chloroplastic (328 aa).

The span at M1–S14 shows a compositional bias: low complexity. Residues M1 to Y21 form a disordered region. The transit peptide at M1–D59 directs the protein to the chloroplast. The Nuclear localization signal motif lies at R267–L275. The RNA binding domain motif lies at E301–L319.

In terms of assembly, subunit of the plastid-encoded RNA polymerase (PEP) complex. Component of a large nuclear subcomplex that may include other PEP subunits (e.g. PTAC12/HMR/PAP5, PTAC14/PAP7 and PTAC7/PAP12). Binds directly to PTAC12/HMR/PAP5 in the nucleus. Interacts with MTERF5. In terms of tissue distribution, mostly expressed in rosette leaves, stems and flowers, and, to a lower extent, in roots and cauline leaves.

It localises to the plastid. It is found in the chloroplast. Its subcellular location is the chloroplast thylakoid. The protein localises to the nucleus. The protein resides in the nucleoplasm. Essential protein involved in plastid gene expression and in chloroplast biogenesis. Links photomorphogenesis and chloroplast biogenesis through its dual localization; required for the formation of late photobodies in the nucleus, as well as for phytochrome B-mediated signaling cascade and subsequent reshaping of the plastid-encoded RNA polymerase (PEP) activity. Binds RNA via specific recognition motifs of viral origin. Recruited by MTERF5 to the transcriptionally paused region of psbEFLJ. Promotes leaf greening. The protein is PLASTID TRANSCRIPTIONALLY ACTIVE protein 6, chloroplastic of Arabidopsis thaliana (Mouse-ear cress).